The following is a 997-amino-acid chain: Kinesin-like protein KIF19 (997 aa).

The Kinesin motor domain maps to 11-346 (QLTVALRIRP…LTYADRAKNI (336 aa)). Residue 104–111 (GPTGCGKT) coordinates ATP. Residues 360 to 437 (HIAQYTSIIS…REQMDIRRQL (78 aa)) are a coiled coil. Residues 468–491 (RARKWRDEHRKETYGKDDSEKDSD) show a composition bias toward basic and acidic residues. Positions 468–503 (RARKWRDEHRKETYGKDDSEKDSDTGDDQSDFIEPP) are disordered. Residues 508-577 (ARETIQILEG…ELEIENTEMQ (70 aa)) adopt a coiled-coil conformation. Disordered stretches follow at residues 662-690 (NLTA…RNPI), 792-811 (GDRL…SMSE), and 848-890 (GGGS…SRSF). Composition is skewed to basic and acidic residues over residues 792 to 802 (GDRLQPMKERS) and 869 to 880 (QKLEKREESLEV). Residues 861 to 889 (HRTQKKQAQKLEKREESLEVKRRKKRSRS) are a coiled coil.

This sequence belongs to the TRAFAC class myosin-kinesin ATPase superfamily. Kinesin family.

The protein resides in the cytoplasm. The protein localises to the cytoskeleton. Its subcellular location is the cell projection. It is found in the cilium. In terms of biological role, plus end-directed microtubule-dependent motor protein that regulates the length of motile cilia by mediating depolymerization of microtubules at ciliary tips. This is Kinesin-like protein KIF19 (kif19) from Xenopus laevis (African clawed frog).